The sequence spans 508 residues: tRNA (guanine(37)-N(1))-methyltransferase (508 aa).

A mitochondrion-targeting transit peptide spans 1–53 (MKFNFWKGLWKPKSLTPTLSHRLYRRMYTPQPPLNREMTVLDRSKFTVSLNLA). An S-adenosyl-L-methionine-binding site is contributed by histidine 253. Over residues 267–284 (RERKQQERAKRENHEKST) the composition is skewed to basic and acidic residues. A disordered region spans residues 267–291 (RERKQQERAKRENHEKSTETAVEPD). S-adenosyl-L-methionine-binding positions include 323 to 324 (DL), 351 to 352 (DG), and asparagine 402.

Belongs to the class I-like SAM-binding methyltransferase superfamily. TRM5/TYW2 family. Monomer.

It is found in the mitochondrion matrix. The protein localises to the nucleus. It localises to the cytoplasm. The catalysed reaction is guanosine(37) in tRNA + S-adenosyl-L-methionine = N(1)-methylguanosine(37) in tRNA + S-adenosyl-L-homocysteine + H(+). Specifically methylates the N1 position of guanosine-37 in various cytoplasmic and mitochondrial tRNAs. Methylation is not dependent on the nature of the nucleoside 5' of the target nucleoside. This is the first step in the biosynthesis of wybutosine (yW), a modified base adjacent to the anticodon of tRNAs and required for accurate decoding. The sequence is that of tRNA (guanine(37)-N(1))-methyltransferase from Yarrowia lipolytica (strain CLIB 122 / E 150) (Yeast).